Consider the following 843-residue polypeptide: MALKAKKSLSAIFRFAMRNAAKTAEVEAKAVAGDSLISDTGPVSMSLIPDFLSSLKSPEDSSNIGQDFGEPALAGQVSSALDVKSIGYNLLRERNGEKVFPKNVLETLDLLSRKGCSSQKPKQASRGRMLTENYQNKQSEIMEKLAKGCVRKLGTETMFEVLTKMGKEAGEKEYNAMTKLCIQRARRSNDAEYALDQIGKAIEHLKEMRQLGFSIGEGAYGPFFKYLVDMEMVAEFQILKDFIKEACPESCGRLVYYEMLLWIQVNDEEKIHKLCNKVDDSGLSLSILQEYYLVALCEKDSKENFQKLLEIVDITTVSSPDALKSIFGYLGKSLLESVAMKLLWELRDCRKDGVETVSNLIFSYATCIPNSTVEDAIFKFNKLHEELDIVPSSTSYENLVSYLCGSNEVVTALDIVENMCEAGLVISANILHSLLQAIEQILEFNLVQRIYSIMSNKSVKPNSETFRKSINLCIRIKDFEGAYNMLGNLKNFNLAPNSSMYNSIMAGYFREKKVNSALKVLKEMKEADVKPDSVTFSYLINYCGEEATIAKYYKEMKQAGVEVNKHVYMSLVKAYASCGQFEKAKQVLMDLEVPAKDHNELKSVLISALASNGNITEALSIYEEMKKLRCPVEPKAILSLIENSDSNAELGTLVELTHELRDSKFWIDGFFKIIVFAVRNNRSSSILDLLEQTKNHLSKDDVGVEYWFEEVFKSIAETESSDVKVGLDLVSFMKEELELCPSRKCLDFLLHACVNAKDKQSALLVWEEYQCAELPYNVINYLRMYQVLVAAGDSKSAEAIVSKIPNDDKDVKCIIKESRIVFTPKLKKKKKKSKQKGLSLQAK.

PPR repeat units follow at residues 392-426 (SSTSYENLVSYLCGSNEVVTALDIVENMCEAGLVI), 427-461 (SANILHSLLQAIEQILEFNLVQRIYSIMSNKSVKP), 462-496 (NSETFRKSINLCIRIKDFEGAYNMLGNLKNFNLAP), 497-531 (NSSMYNSIMAGYFREKKVNSALKVLKEMKEADVKP), 532-562 (DSVTFSYLINYCGEEATIAKYYKEMKQAGVE), 564-594 (NKHVYMSLVKAYASCGQFEKAKQVLMDLEVP), and 598-632 (HNELKSVLISALASNGNITEALSIYEEMKKLRCPV).

Belongs to the PPR family. P subfamily.

Its subcellular location is the mitochondrion. In Arabidopsis thaliana (Mouse-ear cress), this protein is Pentatricopeptide repeat-containing protein At4g21880, mitochondrial.